The primary structure comprises 176 residues: NAD(P)H-quinone oxidoreductase subunit 6, chloroplastic (176 aa).

The next 5 membrane-spanning stretches (helical) occupy residues 10-30, 32-52, 63-83, 92-112, and 152-172; these read FILV…VFFT, TIFS…FYIL, LLIY…FMNG, VWTV…ISQI, and FFLP…GAIF.

This sequence belongs to the complex I subunit 6 family. As to quaternary structure, NDH is composed of at least 16 different subunits, 5 of which are encoded in the nucleus.

The protein localises to the plastid. It localises to the chloroplast thylakoid membrane. The catalysed reaction is a plastoquinone + NADH + (n+1) H(+)(in) = a plastoquinol + NAD(+) + n H(+)(out). It carries out the reaction a plastoquinone + NADPH + (n+1) H(+)(in) = a plastoquinol + NADP(+) + n H(+)(out). Functionally, NDH shuttles electrons from NAD(P)H:plastoquinone, via FMN and iron-sulfur (Fe-S) centers, to quinones in the photosynthetic chain and possibly in a chloroplast respiratory chain. The immediate electron acceptor for the enzyme in this species is believed to be plastoquinone. Couples the redox reaction to proton translocation, and thus conserves the redox energy in a proton gradient. This is NAD(P)H-quinone oxidoreductase subunit 6, chloroplastic (ndhG) from Phaseolus vulgaris (Kidney bean).